A 173-amino-acid chain; its full sequence is RNA pyrophosphohydrolase (173 aa).

Positions 11–164 (PYRKCVGILV…KKHVYTQVVK (154 aa)) constitute a Nudix hydrolase domain. Residues 52–73 (GGINQGEKPIDAARRELYEETG) carry the Nudix box motif.

This sequence belongs to the Nudix hydrolase family. RppH subfamily. It depends on a divalent metal cation as a cofactor.

Its function is as follows. Accelerates the degradation of transcripts by removing pyrophosphate from the 5'-end of triphosphorylated RNA, leading to a more labile monophosphorylated state that can stimulate subsequent ribonuclease cleavage. This chain is RNA pyrophosphohydrolase, found in Bartonella clarridgeiae.